A 317-amino-acid polypeptide reads, in one-letter code: Acetyl-coenzyme A carboxylase carboxyl transferase subunit alpha (317 aa).

Positions 39–293 (KLEGKAQEAL…GNAIAEAMGS (255 aa)) constitute a CoA carboxyltransferase C-terminal domain.

This sequence belongs to the AccA family. As to quaternary structure, acetyl-CoA carboxylase is a heterohexamer composed of biotin carboxyl carrier protein (AccB), biotin carboxylase (AccC) and two subunits each of ACCase subunit alpha (AccA) and ACCase subunit beta (AccD).

It is found in the cytoplasm. The catalysed reaction is N(6)-carboxybiotinyl-L-lysyl-[protein] + acetyl-CoA = N(6)-biotinyl-L-lysyl-[protein] + malonyl-CoA. It participates in lipid metabolism; malonyl-CoA biosynthesis; malonyl-CoA from acetyl-CoA: step 1/1. In terms of biological role, component of the acetyl coenzyme A carboxylase (ACC) complex. First, biotin carboxylase catalyzes the carboxylation of biotin on its carrier protein (BCCP) and then the CO(2) group is transferred by the carboxyltransferase to acetyl-CoA to form malonyl-CoA. The sequence is that of Acetyl-coenzyme A carboxylase carboxyl transferase subunit alpha from Azorhizobium caulinodans (strain ATCC 43989 / DSM 5975 / JCM 20966 / LMG 6465 / NBRC 14845 / NCIMB 13405 / ORS 571).